A 103-amino-acid chain; its full sequence is Small ribosomal subunit protein uS10 (103 aa).

Belongs to the universal ribosomal protein uS10 family. As to quaternary structure, part of the 30S ribosomal subunit.

Involved in the binding of tRNA to the ribosomes. In Fusobacterium nucleatum subsp. nucleatum (strain ATCC 25586 / DSM 15643 / BCRC 10681 / CIP 101130 / JCM 8532 / KCTC 2640 / LMG 13131 / VPI 4355), this protein is Small ribosomal subunit protein uS10.